A 152-amino-acid polypeptide reads, in one-letter code: UPF0719 transmembrane protein MT2674.1 (152 aa).

A run of 4 helical transmembrane segments spans residues 21–41, 62–82, 92–112, and 131–151; these read VATV…FLMV, VVLA…AIYA, IGVA…LVIL, and PAVF…AAAL.

It belongs to the UPF0719 family.

Its subcellular location is the cell membrane. The protein is UPF0719 transmembrane protein MT2674.1 of Mycobacterium tuberculosis (strain CDC 1551 / Oshkosh).